A 242-amino-acid polypeptide reads, in one-letter code: DNA repair protein RecO (242 aa).

Belongs to the RecO family. As to quaternary structure, monomer.

Its function is as follows. Involved in DNA repair and RecF pathway recombination. This chain is DNA repair protein RecO, found in Salmonella schwarzengrund (strain CVM19633).